A 494-amino-acid chain; its full sequence is Endoglucanase 22 (494 aa).

The N-terminal stretch at 1 to 21 (MKPLVCSFIVILLILLPTTIS) is a signal peptide. The active-site Nucleophile is aspartate 76. Residue histidine 413 is part of the active site. A glycan (N-linked (GlcNAc...) asparagine) is linked at asparagine 468. Glutamate 473 is an active-site residue.

Belongs to the glycosyl hydrolase 9 (cellulase E) family.

Its subcellular location is the secreted. The enzyme catalyses Endohydrolysis of (1-&gt;4)-beta-D-glucosidic linkages in cellulose, lichenin and cereal beta-D-glucans.. The protein is Endoglucanase 22 (GH9B16) of Arabidopsis thaliana (Mouse-ear cress).